The following is a 678-amino-acid chain: MTRVCRALLFVLCGIFVHAQENELHFFGPRTDVLVVFTASREAQERETRAVQQLRLLVQDFEHQTPDVSVLVAITAHDHPPVPDFVPVDRLTGTKKLISLISSYKAPIVLILDETTGPPRLHTGAHRTVCPPWLLQAVYQHLTSHHVPIRYRDFDAILHRLGWLHEDPRHALYIKEHIPAVRMENSLYPPGALHTLPALLTQVYSEEWDTHYVSVSYGGTLYLIREQFFVILILGAVITLLLSLAIFSFLSDSRKRHYWNTILAMWWLPAILGVLSVCSVFVATQLTALFFLIRFGTHTSTGALPLLALIVKHSIAIALSCVCMANSKTIRDSMLHNGFIGGYLASTLCLLYAVLFSVIDFSLSAVFALEYALSLVFFSAQRKTTRRIMLAMMFLLFAPFLYAYLKNSAVTAPLSFHQSNVFFALGCVPFMLFMLTLFFEREKSHPRIPFIRRRNLLLSGALLTVLVINGVLWSVSLSSTRIPQEITACYRISERGLTLSLHSPLPIPRHIRARTHARLSTAEIQKAQDHLQISMDSRSYFGGRINVLEVRSQLRAQAIELRITSPHGTAAYEADRPFTRLEQGSVVRFISQARPPLPFTVTFSGDQNSTMQVQATVWTYDNPLQDAPPVMQDTTVRFIPMFELTRDVLFPSPSSQGVHATPEKNACIRDETVPNLQE.

8 helical membrane passes run 228–250, 263–285, 300–322, 334–356, 361–380, 387–405, 420–439, and 455–477; these read FFVILILGAVITLLLSLAIFSFL, LAMWWLPAILGVLSVCSVFVATQ, STGALPLLALIVKHSIAIALSCV, MLHNGFIGGYLASTLCLLYAVLF, FSLSAVFALEYALSLVFFSA, RIMLAMMFLLFAPFLYAYL, NVFFALGCVPFMLFMLTLFF, and NLLLSGALLTVLVINGVLWSVSL. Residues 653–678 form a disordered region; sequence PSSQGVHATPEKNACIRDETVPNLQE.

Its subcellular location is the cell membrane. This is an uncharacterized protein from Treponema pallidum (strain Nichols).